The primary structure comprises 232 residues: Chalcone--flavanone isomerase (232 aa).

Residues threonine 50 and serine 192 each coordinate substrate.

It belongs to the chalcone isomerase family.

It carries out the reaction a chalcone = a flavanone.. Its pathway is secondary metabolite biosynthesis; flavonoid biosynthesis. Its function is as follows. Catalyzes the intramolecular cyclization of bicyclic chalcones into tricyclic (S)-flavanones. Responsible for the isomerization of 4,2',4',6'-tetrahydroxychalcone (also termed chalcone) into naringenin. The chain is Chalcone--flavanone isomerase (CHI) from Saussurea medusa (Saw-wort).